Reading from the N-terminus, the 254-residue chain is AA9 family lytic polysaccharide monooxygenase A (254 aa).

The first 19 residues, 1–19, serve as a signal peptide directing secretion; it reads MKYSILGLTALSFVASAAA. His-20 serves as a coordination point for Cu(2+). Methylhistidine is present on His-20. Residue Val-28 participates in (1,4-beta-D-glucosyl)n binding. N-linked (GlcNAc...) asparagine glycosylation occurs at Asn-52. An intrachain disulfide couples Cys-60 to Cys-186. (1,4-beta-D-glucosyl)n contacts are provided by Val-66, Val-67, Asp-77, and Asn-86. His-97 is a binding site for Cu(2+). N-linked (GlcNAc...) asparagine glycosylation is present at Asn-129. Residues Val-148 and Arg-159 each coordinate (1,4-beta-D-glucosyl)n. 2 residues coordinate O2: His-166 and Gln-181. Tyr-183 contributes to the Cu(2+) binding site.

It belongs to the polysaccharide monooxygenase AA9 family. It depends on Cu(2+) as a cofactor. In terms of processing, the catalytically essential N-terminal histidine His-20 is post-translationally modified by methylation to prevent protonation of the histidine side chain, and protect the critical active site of the enzyme from oxidative damage.

The protein resides in the secreted. It catalyses the reaction [(1-&gt;4)-beta-D-glucosyl]n+m + reduced acceptor + O2 = 4-dehydro-beta-D-glucosyl-[(1-&gt;4)-beta-D-glucosyl]n-1 + [(1-&gt;4)-beta-D-glucosyl]m + acceptor + H2O.. Its activity is regulated as follows. The polyphenol cinnamtannin B1 contained in methanolic extract of Cinnamomum cassia (cinnamon) acts as an inhibitor of catalytic activity. Lytic polysaccharide monooxygenase (LPMO) that depolymerizes crystalline and amorphous polysaccharides via the oxidation of scissile alpha- or beta-(1-4)-glycosidic bonds, yielding C1 or C4 oxidation product. Catalysis by LPMOs requires the reduction of the active-site copper from Cu(II) to Cu(I) by a reducing agent and H(2)O(2) or O(2) as a cosubstrate. Is able to cleave phosphoric acid swollen cellulose (PASC) in the presence of a reducing agent, yielding a range of cellooligosaccharides dominated by cellobiose and cellotriose. Activity is less sensitive to the reducing agent potential when cleaving xylan, suggesting that distinct catalytic mechanisms exist for xylan and glucan cleavage. The sequence is that of AA9 family lytic polysaccharide monooxygenase A from Panus similis (Lentinoid fungus).